The following is a 199-amino-acid chain: Hematopoietic prostaglandin D synthase (199 aa).

The 78-residue stretch at 2 to 79 (PNYKLLYFNM…YLTKNTDLAG (78 aa)) folds into the GST N-terminal domain. Glutathione-binding positions include Tyr8, Arg14, Trp39, 49–51 (GKI), and 63–64 (QS). In terms of domain architecture, GST C-terminal spans 81-199 (TALEQCQADA…WILKRPQTKL (119 aa)).

Belongs to the GST superfamily. Sigma family. In terms of assembly, homodimer. It depends on glutathione as a cofactor. Expressed in skin and oviduct.

The protein localises to the cytoplasm. The catalysed reaction is prostaglandin H2 = prostaglandin D2. It carries out the reaction RX + glutathione = an S-substituted glutathione + a halide anion + H(+). It catalyses the reaction 2-glyceryl-prostaglandin H2 = 2-glyceryl-prostaglandin D2. In terms of biological role, bifunctional enzyme which catalyzes both the conversion of PGH2 to PGD2, a prostaglandin involved in smooth muscle contraction/relaxation and a potent inhibitor of platelet aggregation, and the conjugation of glutathione with a wide range of aryl halides and organic isothiocyanates. Also exhibits low glutathione-peroxidase activity. The polypeptide is Hematopoietic prostaglandin D synthase (Mus musculus (Mouse)).